The following is a 270-amino-acid chain: Flavodoxin/ferredoxin--NADP reductase (270 aa).

The FAD-binding FR-type domain occupies 12-113 (VLPDAQTVTS…PKPVGTLVID (102 aa)). FAD-binding positions include 62-65 (RAYS), 78-80 (YSI), and 86-88 (PLT). Thr-126 contacts NADP(+). Position 128 (Thr-128) interacts with FAD. Residues Arg-156, 192-193 (TR), Arg-201, and Asp-238 each bind NADP(+). 264-270 (AFVGEGI) contacts FAD.

It belongs to the ferredoxin--NADP reductase type 1 family. As to quaternary structure, monomer. It depends on FAD as a cofactor.

Its subcellular location is the cytoplasm. The enzyme catalyses 2 reduced [2Fe-2S]-[ferredoxin] + NADP(+) + H(+) = 2 oxidized [2Fe-2S]-[ferredoxin] + NADPH. The catalysed reaction is reduced [flavodoxin] + NADP(+) = oxidized [flavodoxin] + NADPH + 2 H(+). In terms of biological role, transports electrons between flavodoxin or ferredoxin and NADPH. The polypeptide is Flavodoxin/ferredoxin--NADP reductase (Rhodobacter capsulatus (Rhodopseudomonas capsulata)).